The following is a 505-amino-acid chain: Flagellin (505 aa).

It belongs to the bacterial flagellin family.

The protein localises to the secreted. Its subcellular location is the bacterial flagellum. Flagellin is the subunit protein which polymerizes to form the filaments of bacterial flagella. The chain is Flagellin (fliC) from Salmonella dublin.